Here is an 84-residue protein sequence, read N- to C-terminus: Cell division topological specificity factor (84 aa).

It belongs to the MinE family.

Prevents the cell division inhibition by proteins MinC and MinD at internal division sites while permitting inhibition at polar sites. This ensures cell division at the proper site by restricting the formation of a division septum at the midpoint of the long axis of the cell. This Pseudomonas aeruginosa (strain LESB58) protein is Cell division topological specificity factor.